A 1641-amino-acid chain; its full sequence is Ophiophagus venom factor (1641 aa).

The signal sequence occupies residues 1–22; that stretch reads MEGMALYLVAALLIGFPGSSHG. Residues N181 and N209 are each glycosylated (N-linked (GlcNAc...) asparagine). Mg(2+)-binding residues include P507, D530, V531, and D533. Disulfide bonds link C535–C796, C604–C639, C672–C699, C673–C706, C686–C707, C852–C1491, C1336–C1467, C1367–C1436, C1484–C1489, C1496–C1568, C1515–C1639, and C1615–C1624. The propeptide occupies 645–728; it reads RRRRSSVLLL…WESGLFLPRN (84 aa). The tract at residues 649 to 727 is C3a-like domain; it reads SSVLLLDSKA…QWESGLFLPR (79 aa). The 36-residue stretch at 672–707 folds into the Anaphylatoxin-like domain; the sequence is CCEDSMHENPMGYTCEKRAKYIQEGDACKAAFLECC. A factor B binding site region spans residues 731–742; the sequence is EDGFIQDSDIIP. The propeptide occupies 981–1259; that stretch reads HLIITPSGCG…VMLFQALAEY (279 aa). The interval 981–1259 is C3d-like domain; sequence HLIITPSGCG…VMLFQALAEY (279 aa). Residues 989-992 constitute a cross-link (isoglutamyl cysteine thioester (Cys-Gln)); the sequence is CGEQ. The interval 1186–1249 is factor H binding site; sequence VLMAASTGKN…GGTYGQTQAT (64 aa). The region spanning 1496–1639 is the NTR domain; it reads CSLLSQQEKI…LSNILTIFGC (144 aa).

It belongs to the venom complement C3 homolog family. In terms of assembly, heterotrimer of alpha, beta and gamma chains; disulfide-linked. May be active with factor B in the presence of factor D. First processed by the removal of 4 Arg residues by furin-type protease, forming two chains, alpha and gamma/beta precursor, linked by a disulfide bond. Probably, a cobrin-like protease cleaves the C3a-like domain and then the C3d-like domain, generating the mature venom factor (OVF). Post-translationally, the beta chain is not glycosylated. Expressed by the venom gland.

Its subcellular location is the secreted. In terms of biological role, complement-activating protein in cobra venom. It is a structural and functional analog of complement component C3b, the activated form of C3. It binds factor B (CFB), which is subsequently cleaved by factor D (CFD) to form the bimolecular complex OVF/Bb. OVF/Bb is a C3/C5 convertase that cleaves both complement components C3 and C5. Structurally, it resembles the C3b degradation product C3c, which is not able to form a C3/C5 convertase. Unlike C3b/Bb, OVF/Bb is a stable complex and completely resistant to the actions of complement regulatory factors H (CFH) and I (CFI). Therefore, OVF continuously activates complement. As a result, OVF exhibits complement-depleting activity. This is Ophiophagus venom factor from Ophiophagus hannah (King cobra).